Reading from the N-terminus, the 175-residue chain is UPF0398 protein SPD_0338 (175 aa).

It belongs to the UPF0398 family.

This chain is UPF0398 protein SPD_0338, found in Streptococcus pneumoniae serotype 2 (strain D39 / NCTC 7466).